The primary structure comprises 227 residues: DNA repair protein RecO (227 aa).

It belongs to the RecO family.

Its function is as follows. Involved in DNA repair and RecF pathway recombination. The chain is DNA repair protein RecO from Pseudomonas entomophila (strain L48).